The primary structure comprises 208 residues: HTLV-1 basic zipper factor (208 aa).

Residues 59 to 93 (RLRWGPVGEEAPPRGETHRDRQRRAEEKRKRKRER) are disordered. The span at 69–86 (APPRGETHRDRQRRAEEK) shows a compositional bias: basic and acidic residues. Short sequence motifs (nuclear localization signal) lie at residues 86-91 (KRKRKR), 115-119 (RRRRA), and 136-140 (RRERK). The span at 125-143 (DRARRKLEEEERRERKWRQ) shows a compositional bias: basic and acidic residues. The disordered stretch occupies residues 125–160 (DRARRKLEEEERRERKWRQTEQGAKQRSARKEKMTE).

Belongs to the HTLV-1 HBZ protein family. As to quaternary structure, interacts with host ATF4; this interaction inhibits viral RNA transcriptional activation by preventing ATF4 binding to Tax-responsive elements. Interacts with host CREB1; this interaction inhibits host CREB1 transcriptional activity. Interacts with host JUN, JUNB and JUND. Interacts with host EP300.

Its subcellular location is the host nucleus. In terms of biological role, contributes to the regulation of viral RNA transcription by interacting with host proteins involved in transcriptional activation such as ATF4, or CREB1, and by inhibiting their activity. Additionally, HBZ suppresses host NF-kappa-B-driven transcription mediated by host RELA as well as transcription of some classical NF-kappa-B target genes, including IL8, IL2RA, IRF4, VCAM1, and VEGFA. This Human T-cell leukemia virus 1 (isolate Melanesia mel5 subtype C) (HTLV-1) protein is HTLV-1 basic zipper factor (HBZ).